Here is an 80-residue protein sequence, read N- to C-terminus: Large ribosomal subunit protein bL31B (80 aa).

It belongs to the bacterial ribosomal protein bL31 family. Type B subfamily. As to quaternary structure, part of the 50S ribosomal subunit.

This is Large ribosomal subunit protein bL31B from Xylella fastidiosa (strain 9a5c).